The primary structure comprises 303 residues: Peroxisomal trans-2-enoyl-CoA reductase (303 aa).

Residue 23 to 47 (VTGGATGIGKAIVKELLELGSNVVI) participates in NADP(+) binding. Lys32 is modified (N6-succinyllysine). Ser49 carries the phosphoserine modification. Tyr179 (proton acceptor) is an active-site residue. Tyr179 is subject to Phosphotyrosine. The short motif at 301–303 (AKL) is the Microbody targeting signal element.

The protein belongs to the short-chain dehydrogenases/reductases (SDR) family. Interacts with PEX5, probably required to target it into peroxisomes.

Its subcellular location is the peroxisome. It carries out the reaction a (2E)-enoyl-CoA + NADPH + H(+) = a 2,3-saturated acyl-CoA + NADP(+). It catalyses the reaction (2E)-decenoyl-CoA + NADPH + H(+) = decanoyl-CoA + NADP(+). The enzyme catalyses (2E)-hexenoyl-CoA + NADPH + H(+) = hexanoyl-CoA + NADP(+). The catalysed reaction is (2E)-octenoyl-CoA + NADPH + H(+) = octanoyl-CoA + NADP(+). It carries out the reaction (2E)-dodecenoyl-CoA + NADPH + H(+) = dodecanoyl-CoA + NADP(+). It catalyses the reaction (2E)-tetradecenoyl-CoA + NADPH + H(+) = tetradecanoyl-CoA + NADP(+). Its pathway is lipid metabolism; fatty acid biosynthesis. Functionally, participates in chain elongation of fatty acids. Catalyzes the reduction of trans-2-enoyl-CoAs of varying chain lengths from 6:1 to 16:1, having maximum activity with 10:1 CoA. Has no 2,4-dienoyl-CoA reductase activity. The polypeptide is Peroxisomal trans-2-enoyl-CoA reductase (Homo sapiens (Human)).